The chain runs to 327 residues: MIEIKDKQLTGLRFIDLFAGLGGFRLALESCGAECVYSNEWDKYAQEVYEMNFGEKPEGDITQVNEKTIPDHDILCAGFPCQAFSISGKQKGFEDSRGTLFFDIARIVREKKPKVVFMENVKNFASHDNGNTLEVVKNTMNELDYSFHAKVLNALDYGIPQKRERIYMICFRNDLNIQNFQFPKPFELNTFVKDLLLPDSEVEHLVIDRKDLVMTNQEIEQTTPKTVRLGIVGKGGQGERIYSTRGIAITLSAYGGGIFAKTGGYLVNGKTRKLHPRECARVMGYPDSYKVHPSTSQAYKQFGNSVVINVLQYIAYNIGSSLNFKPY.

The SAM-dependent MTase C5-type domain occupies 12-325 (LRFIDLFAGL…YNIGSSLNFK (314 aa)). Cysteine 81 is an active-site residue.

The protein belongs to the class I-like SAM-binding methyltransferase superfamily. C5-methyltransferase family. Monomer.

It catalyses the reaction a 2'-deoxycytidine in DNA + S-adenosyl-L-methionine = a 5-methyl-2'-deoxycytidine in DNA + S-adenosyl-L-homocysteine + H(+). Functionally, a methylase, recognizes the double-stranded sequence 5'-GCGC-3', methylates C-2 on both strands, and protects the DNA from cleavage by the HhaI endonuclease. The sequence is that of Type II methyltransferase M.HhaI (hhaIM) from Haemophilus parahaemolyticus.